We begin with the raw amino-acid sequence, 639 residues long: Bucky ball (639 aa).

Residues 178–187 (ATKECKEDPV) show a composition bias toward basic and acidic residues. 3 disordered regions span residues 178–205 (ATKECKEDPVTRPTTYSDSAYDAESSQG), 218–242 (LDSSSVHEEEEEEEKDVNEEDEPQT), and 581–614 (RSWRQVTGPQDQGRTPLRRSTCKSIHQQRPRSEY). A compositionally biased stretch (polar residues) spans 189 to 205 (RPTTYSDSAYDAESSQG). A compositionally biased stretch (acidic residues) spans 225 to 240 (EEEEEEEKDVNEEDEP). Polar residues predominate over residues 584–593 (RQVTGPQDQG). A compositionally biased stretch (basic residues) spans 596–609 (PLRRSTCKSIHQQR). Residues Arg-627 and Arg-629 each carry the symmetric dimethylarginine modification. Short sequence motifs (RG Motif) lie at residues 627 to 628 (RG), 629 to 630 (RG), and 635 to 636 (RG).

Specifically interacts (when methylated) with tdrd6 (via Tudor domain); interaction is responsible for recruitment of different protein complexes to germ plasm. Interacts with rbpms2 and dazl; interaction mediates Balbiani body formation. Interacts with kif5ba; interaction leads to buc enrichment at the embryonic cleavage furrows and mediates dorsoventral patterning. Symmetric dimethylarginine modification promotes interaction with tdrd6.

The protein resides in the cytoplasm. The protein localises to the cleavage furrow. In terms of biological role, prion-like protein required for the formation of Balbiani body (electron-dense aggregates in the oocyte) and germ plasm assembly, and for the establishment of oocyte polarity during early oogenesis. Mobility and aggregation properties are improved by tudor domain-containing protein tdrd6 through interaction with dimethylated arginines Tri-RG domains. Establishes oocyte polarity through interactions with RNA-binding proteins rbpms2 and dazl, initiating a positive feedback loop amplification mechanism in the Balbiani body. Interaction of BUC protein and mRNA with rbpms2 and dazl is required to mediate Balbiani body formation. Involved in recruitment of germ plasm to embryonic cleavage furrows and dorsoventral patterning through interaction with Kinesin-1/KIF5BA. The polypeptide is Bucky ball (Danio rerio (Zebrafish)).